The chain runs to 276 residues: CTD small phosphatase-like protein (276 aa).

Residues 1 to 31 (MDGPAIITQVTNPKEDEARSPVAGEKASQRN) form a disordered region. An FCP1 homology domain is found at 102–260 (LDYGKKCVVI…LDLIPFFEGL (159 aa)). Asp-112 serves as the catalytic 4-aspartylphosphate intermediate. Mg(2+) is bound by residues Asp-112, Asp-114, and Asn-223. The active-site Proton donor is Asp-114.

As to quaternary structure, monomer. Interacts with REST. The cofactor is Mg(2+).

The protein localises to the nucleus. The catalysed reaction is O-phospho-L-seryl-[protein] + H2O = L-seryl-[protein] + phosphate. The enzyme catalyses O-phospho-L-threonyl-[protein] + H2O = L-threonyl-[protein] + phosphate. In terms of biological role, preferentially catalyzes the dephosphorylation of 'Ser-5' within the tandem 7 residue repeats in the C-terminal domain (CTD) of the largest RNA polymerase II subunit POLR2A. Negatively regulates RNA polymerase II transcription, possibly by controlling the transition from initiation/capping to processive transcript elongation. Recruited by REST to neuronal genes that contain RE-1 elements, leading to neuronal gene silencing in non-neuronal cells. This Mus musculus (Mouse) protein is CTD small phosphatase-like protein (Ctdspl).